The chain runs to 942 residues: MAAAAEPGARAWLGGGSPRPGSPACSPVLGSGGRARPGPGPGPGPERAGVRAPGPAAAPGHSFRKVTLTKPTFCHLCSDFIWGLAGFLCDVCNFMSHEKCLKHVRIPCTSVAPSLVRVPVAHCFGPRGLHKRKFCAVCRKVLEAPALHCEVCELHLHPDCVPFACSDCRQCHQDGHQDHDTHHHHWREGNLPSGARCEVCRKTCGSSDVLAGVRCEWCGVQAHSLCSAALAPECGFGRLRSLVLPPACVRLLPGGFSKTQSFRIVEAAEPGEGGDGADGSAAVGPGRETQATPESGKQTLKIFDGDDAVRRSQFRLVTVSRLAGAEEVLEAALRAHHIPEDPGHLELCRLPPSSQACDAWAGGKAGSAVISEEGRSPGSGEATPEAWVIRALPRAQEVLKIYPGWLKVGVAYVSVRVTPKSTARSVVLEVLPLLGRQAESPESFQLVEVAMGCRHVQRTMLMDEQPLLDRLQDIRQMSVRQVSQTRFYVAESRDVAPHVSLFVGGLPPGLSPEEYSSLLHEAGATKATVVSVSHIYSSQGAVVLDVACFAEAERLYMLLKDMAVRGRLLTALVLPDLLHAKLPPDSCPLLVFVNPKSGGLKGRDLLCSFRKLLNPHQVFDLTNGGPLPGLHLFSQVPCFRVLVCGGDGTVGWVLGALEETRYRLACPEPSVAILPLGTGNDLGRVLRWGAGYSGEDPFSVLLSVDEADAVLMDRWTILLDAHEAGSAENDTADAEPPKIVQMSNYCGIGIDAELSLDFHQAREEEPGKFTSRLHNKGVYVRVGLQKISHSRSLHKQIRLQVERQEVELPSIEGLIFINIPSWGSGADLWGSDSDTRFEKPRMDDGLLEVVGVTGVVHMGQVQGGLRSGIRIAQGSYFRVTLLKATPVQVDGEPWVQAPGHMIISAAGPKVHMLRKAKQKPRRAGTTRDARADAAPAPESDPR.

Residues 1-59 (MAAAAEPGARAWLGGGSPRPGSPACSPVLGSGGRARPGPGPGPGPERAGVRAPGPAAAP) form a disordered region. Phosphoserine occurs at positions 22 and 26. Low complexity predominate over residues 45–59 (PERAGVRAPGPAAAP). 3 consecutive Phorbol-ester/DAG-type zinc fingers follow at residues 60–108 (GHSF…RIPC), 121–168 (AHCF…CSDC), and 183–234 (HHHW…APEC). Residues 269-295 (EPGEGGDGADGSAAVGPGRETQATPES) form a disordered region. The Ras-associating domain maps to 395 to 494 (AQEVLKIYPG…TRFYVAESRD (100 aa)). 2 consecutive short sequence motifs (LXXLL motif) follow at residues 555 to 559 (LYMLL) and 574 to 578 (LPDLL). A DAGKc domain is found at 584–721 (PDSCPLLVFV…MDRWTILLDA (138 aa)). A disordered region spans residues 908 to 942 (PKVHMLRKAKQKPRRAGTTRDARADAAPAPESDPR). The span at 911–924 (HMLRKAKQKPRRAG) shows a compositional bias: basic residues. Low complexity predominate over residues 932–942 (DAAPAPESDPR).

Belongs to the eukaryotic diacylglycerol kinase family. In terms of assembly, interacts with RHOA (constitutively activated, GTP-bound); the interaction inhibits DGKQ. Interacts with PRKCE. Interacts with PRKCH. Interacts with PLCB1. Interacts with NR5A1; the interaction requires both LXXLL motifs in DGKQ and is required for full phosphatidic acid-mediated activation of NR5A1. Post-translationally, phosphorylated by PRKCE and PRKCH in vitro.

The protein resides in the cytoplasm. It is found in the cytosol. It localises to the cell membrane. Its subcellular location is the synapse. The protein localises to the cytoskeleton. The protein resides in the nucleus. It is found in the nucleus speckle. It localises to the nucleus matrix. It carries out the reaction a 1,2-diacyl-sn-glycerol + ATP = a 1,2-diacyl-sn-glycero-3-phosphate + ADP + H(+). The enzyme catalyses a 1-O-alkyl-sn-glycerol + ATP = a 1-O-alkyl-sn-glycero-3-phosphate + ADP + H(+). It catalyses the reaction 1-O-alkyl-2-acyl-sn-glycerol + ATP = 1-O-alkyl-2-acyl-sn-glycero-3-phosphate + ADP + H(+). The catalysed reaction is 1,2-di-(9Z-octadecenoyl)-sn-glycerol + ATP = 1,2-di-(9Z-octadecenoyl)-sn-glycero-3-phosphate + ADP + H(+). It carries out the reaction 1-O-hexadecyl-sn-glycerol + ATP = 1-O-hexadecyl-sn-glycero-3-phosphate + ADP + H(+). The enzyme catalyses 1-O-hexadecyl-2-acetyl-sn-glycerol + ATP = 1-O-hexadecyl-2-acetyl-sn-glycero-3-phosphate + ADP + H(+). It catalyses the reaction 1-octadecanoyl-2-(5Z,8Z,11Z,14Z-eicosatetraenoyl)-sn-glycerol + ATP = 1-octadecanoyl-2-(5Z,8Z,11Z,14Z-eicosatetraenoyl)-sn-glycero-3-phosphate + ADP + H(+). It functions in the pathway lipid metabolism; glycerolipid metabolism. With respect to regulation, activated by phosphatidylserine. In terms of biological role, diacylglycerol kinase that converts diacylglycerol/DAG into phosphatidic acid/phosphatidate/PA and regulates the respective levels of these two bioactive lipids. Thereby, acts as a central switch between the signaling pathways activated by these second messengers with different cellular targets and opposite effects in numerous biological processes. Within the adrenocorticotropic hormone signaling pathway, produces phosphatidic acid which in turn activates NR5A1 and subsequent steroidogenic gene transcription. Also functions downstream of the nerve growth factor signaling pathway being specifically activated in the nucleus by the growth factor. Through its diacylglycerol activity also regulates synaptic vesicle endocytosis. This chain is Diacylglycerol kinase theta, found in Homo sapiens (Human).